The chain runs to 372 residues: Ubl carboxyl-terminal hydrolase 18 (372 aa).

Residues 19–45 (SSQSPADLEEKKEEDSNMKREQPRERP) are disordered. The segment covering 26-45 (LEEKKEEDSNMKREQPRERP) has biased composition (basic and acidic residues). The tract at residues 36-51 (MKREQPRERPRAWDYP) is mediates interaction with IFNAR2. Positions 51–112 (PHGLVGLHNI…MLLLLEKMQD (62 aa)) are mediates interaction with STAT2. Residues 55–370 (VGLHNIGQTC…TAYLLVYMKM (316 aa)) form the USP domain. The active-site Nucleophile is C64. The mediates interaction with STAT2 and necessary for the negative regulation of the type I IFN signaling pathway stretch occupies residues 303 to 312 (ELFAVIAHVG). Positions 313-372 (MADSGHYCVYIRNAVDGKWFCFNDSNICLVSWEDIQCTYGNPNYHWQETAYLLVYMKMEC) are mediates interaction with IFNAR2. The active-site Proton acceptor is H318.

The protein belongs to the peptidase C19 family. As to quaternary structure, interacts with STAT2; the interaction is direct. Interacts with IFNAR2; indirectly via STAT2, it negatively regulates the assembly of the ternary interferon-IFNAR1-IFNAR2 complex and inhibits type I interferon signaling. Interacts with STING1. Interacts with USP20.

It localises to the cytoplasm. The protein localises to the nucleus. It catalyses the reaction Thiol-dependent hydrolysis of ester, thioester, amide, peptide and isopeptide bonds formed by the C-terminal Gly of ubiquitin (a 76-residue protein attached to proteins as an intracellular targeting signal).. Interferon-induced ISG15-specific protease that plays a crucial role for maintaining a proper balance of ISG15-conjugated proteins in cells. Regulates protein ISGylation by efficiently cleaving ISG15 conjugates linked via isopeptide bonds. Regulates T-cell activation and T-helper 17 (Th17) cell differentiation by deubiquitinating TAK1, likely to keep TAK1-TAB complexes in steady conditions. In turn, restricts activation of NF-kappa-B, NFAT, and JNK as well as expression of IL2 in T-cells after TCR activation. Acts as a molecular adapter with USP20 to promote innate antiviral response through deubiquitinating STING1. Involved also in the negative regulation of the inflammatory response triggered by type I interferon. Upon recruitment by STAT2 to the type I interferon receptor subunit IFNAR2 interferes with the assembly of the ternary interferon-IFNAR1-IFNAR2 complex and acts as a negative regulator of the type I interferon signaling pathway. In terms of biological role, has enzymatic activity similar to isoform 1 and interferes with type I interferon signaling. Major deISGylation enzyme for nuclear proteins. The polypeptide is Ubl carboxyl-terminal hydrolase 18 (USP18) (Homo sapiens (Human)).